The following is a 906-amino-acid chain: MIANILKKVFGSRNDRLLKQYRAVVNRINALESGLQTLDDAALAGKTAEFRARVEKGERLDSLLPEAFAVCREASRRVMGMRHFDVQLIGGMVLHDGKIAEMRTGEGKTLVATLPAYLNALAGKGVHVVTVNDYLASRDAGIMAPLYNFLGLSVGVNLSQMPHDAKQDAYAADITYGTNNEFGFDYLRDNMVYSPAERVQKPLSFAIVDEVDSILIDEARTPLIISGPADDNVDMYRRMNAIPALLVRQQAEDGEGDYWVDEKAHTVMLSEAGFEHAEAALVAADLLKEGESLYSAANITLMHHLMAALRAHALFHRDQHYVVQDGEIVIVDEFTGRLMAGRRWSEGLHQAVEAKEGVNINRENQTLASITFQNYFRLYKKLAGMTGTADTEAYEFQQIYGLETVVIPTNRPMVRKDSLDLVYRTGQEKYNAILADITDCHQRGQPVLVGTTSIENSELLAGLLKQAGLPHNVLNAKEHAREADIIVQAGRPGVVTVATNMAGRGTDIVLGGNIAPEIKAIESDESLTADDRAQRIAALKAEWQARHDAVLAAGGLHIIGTERHESRRIDNQLRGRSGRQGDPGSSRFYLSLEDPLLRIFASERVSAIMQRLNMPEGEAIEHSWVTRAIENAQRKVEGRNFDIRKQLLEYDDVANDQRRVIYQQRNEILESEEVSDMIAAMRDDVLSQLFDTWMPPQSIEEQWDAAGLMRVLEADYQISVPLADWIKAEPNAELDTFKIRILEQARALYDEKVAAVGAASMQQFERAVLLQHFDGAWREHLAALDHLRQGIHLRGYAQKNPKQEYKREAFELFSLMLDRIKREVTQIVATVQIRSPEEAAAAEAFEHEERPMTYRHDEFTVEGDEAGEGNPFTAEKLAAAGVRVGRNDPCPCGSGKRYKQCHGRLA.

ATP is bound by residues Gln-87, 105 to 109, and Asp-507; that span reads GEGKT. Zn(2+) is bound by residues Cys-890, Cys-892, Cys-901, and His-902.

The protein belongs to the SecA family. As to quaternary structure, monomer and homodimer. Part of the essential Sec protein translocation apparatus which comprises SecA, SecYEG and auxiliary proteins SecDF-YajC and YidC. It depends on Zn(2+) as a cofactor.

The protein resides in the cell inner membrane. It is found in the cytoplasm. The enzyme catalyses ATP + H2O + cellular proteinSide 1 = ADP + phosphate + cellular proteinSide 2.. Functionally, part of the Sec protein translocase complex. Interacts with the SecYEG preprotein conducting channel. Has a central role in coupling the hydrolysis of ATP to the transfer of proteins into and across the cell membrane, serving both as a receptor for the preprotein-SecB complex and as an ATP-driven molecular motor driving the stepwise translocation of polypeptide chains across the membrane. This is Protein translocase subunit SecA from Laribacter hongkongensis (strain HLHK9).